The sequence spans 240 residues: 1-(5-phosphoribosyl)-5-[(5-phosphoribosylamino)methylideneamino] imidazole-4-carboxamide isomerase (240 aa).

The active-site Proton acceptor is the D8. D129 functions as the Proton donor in the catalytic mechanism.

It belongs to the HisA/HisF family.

The protein resides in the cytoplasm. The enzyme catalyses 1-(5-phospho-beta-D-ribosyl)-5-[(5-phospho-beta-D-ribosylamino)methylideneamino]imidazole-4-carboxamide = 5-[(5-phospho-1-deoxy-D-ribulos-1-ylimino)methylamino]-1-(5-phospho-beta-D-ribosyl)imidazole-4-carboxamide. It participates in amino-acid biosynthesis; L-histidine biosynthesis; L-histidine from 5-phospho-alpha-D-ribose 1-diphosphate: step 4/9. The sequence is that of 1-(5-phosphoribosyl)-5-[(5-phosphoribosylamino)methylideneamino] imidazole-4-carboxamide isomerase from Listeria monocytogenes serotype 4a (strain HCC23).